Reading from the N-terminus, the 157-residue chain is Transcription elongation factor GreA (157 aa).

Residues 1–75 (MSKEIILTQE…VETLINRAKV (75 aa)) are a coiled coil.

Belongs to the GreA/GreB family.

In terms of biological role, necessary for efficient RNA polymerase transcription elongation past template-encoded arresting sites. The arresting sites in DNA have the property of trapping a certain fraction of elongating RNA polymerases that pass through, resulting in locked ternary complexes. Cleavage of the nascent transcript by cleavage factors such as GreA or GreB allows the resumption of elongation from the new 3'terminus. GreA releases sequences of 2 to 3 nucleotides. The chain is Transcription elongation factor GreA from Mycoplasma capricolum subsp. capricolum (strain California kid / ATCC 27343 / NCTC 10154).